Consider the following 956-residue polypeptide: Replication factor C subunit 1 (956 aa).

Basic and acidic residues-rich tracts occupy residues M1–G15 and T50–E74. Disordered regions lie at residues M1–C206 and K286–K332. Over residues R158–M183 the composition is skewed to gly residues. Basic and acidic residues-rich tracts occupy residues G186–P200 and S288–E298. In terms of domain architecture, BRCT spans G202 to R292. S399–K406 contacts ATP. The interval L858 to R956 is disordered. The span at R866–T892 shows a compositional bias: acidic residues. The span at K916–K925 shows a compositional bias: low complexity.

It belongs to the activator 1 large subunit family. Heterotetramer of subunits RFC2, RFC3, RFC4 and RFC5 that can form a complex with RFC1. In terms of tissue distribution, expressed at high levels in flowers and siliques, and at lower levels in roots, stems and leaves.

It is found in the nucleus. Functionally, plays a role as mediator of transcriptional gene silencing (TGS), DNA replication, DNA repair, hypersensitive response (HR) and telomere length regulation. Is required in meiosis for DNA double-strand break (DSB) repair during meiotic homologous recombination. May participate in the RAD51-mediated recombination intermediate repair process. Is important for lagging strand synthesis. Promotes meiotic recombination via a specific pathway for crossovers (COs) that involves the formation of double Holliday Junction (dHJ) intermediates. This is Replication factor C subunit 1 (RFC1) from Arabidopsis thaliana (Mouse-ear cress).